A 1069-amino-acid polypeptide reads, in one-letter code: MSPVKRWGSPCLFPLQLFSLCWVLSVAQSKTVRYSTFEEDAPGTVIGTLAEDLHMKVSGDTSFRLMKQFNSSLLRVREGDGQLTVGDAGLDRERLCGQSPQCVLAFDVVSFSQEQFRLVHVEVEVRDVNDHAPRFPRAQIPVEVSESAPVGTRIPLEVPVDEDVGANGLQSVRLAEPHSPFRVELQTRADGAQCADLVLLQELDRESQASYSLELVAQDGGRPPRSATAALSVRVLDANDHSPAFPQGAVAEVELAEDAPVGSLLLDLDAADPDEGPNGDVVFTFGARTPPEARHLFRLDPRSGRLTLAGQVDYERQDTYELDVRAQDRGPGPRTATCKVIVRIRDVNDNAPDISITPLAAPGAPATSPFAAAAAAAALGGADAASSAGSGTQETGVTSLVPEGAARESLVALVSTSDRDSGANGQVRCALYGHEHFRLQPAYAGSYLVVTAASLDRERIAEYNLTLVAEDRGAPPLRTVRPYTVRVGDENDNAPLFTKPVYEVSVRENNPPGAYLATVAARDPDLGRNGQVTYRLVEAEVGRSGEAVSTYVSVDPATGAIYALRSFDYETLRQLDVRVQASDGGSPQLSSNALVQVRVLDQNDHSPVLVHPAPANGSLEVAVPGRSTKDTAVARIQARDADEGANGELAFDLLQQEPREAFSIGRHTGEIVLTGDLSQEPPGRVFKALLVISDGGRPPLTTTATVSFVVTAGGGSAVPASAGSPEHFRPPGSRLAPSGPSLQWDTPLIVIIVLAGSCTLLLAAIIAIATTCNRRKKEVRKGGALREERPGAAGGGASAPGSPDETARGTGPRPNMFDVLTFPGSGKAPFGSPAADAPPPAVAAAEVPGSEGGSATGESACHFEGQQRLRGAHAEPYSASPGFGKEPAPPVAVWKGHSFNTISGREAEKFSGKDSGKGDSDFNDSDSDISGDALKKDLINHMQSGLWACTAECKILGHSDRCWSPSCAGPNTHPPPHPPAQMSTFCKSTSLPRDPLRRDNYYQAQLPKTVGLQSVYEKVLHRDYDRTVTLLSPPRPGRLPDLQEIGVPLYESPPGGRYVSPKKGTNENV.

The N-terminal stretch at 1-29 (MSPVKRWGSPCLFPLQLFSLCWVLSVAQS) is a signal peptide. Cadherin domains follow at residues 30-135 (KTVR…APRF), 136-245 (PRAQ…SPAF), 247-354 (QGAV…APDI), 393-497 (QETG…APLF), 498-609 (TKPV…SPVL), and 615-721 (ANGS…VPAS). Residues 30 to 747 (KTVRYSTFEE…SGPSLQWDTP (718 aa)) lie on the Extracellular side of the membrane. Residue Asn616 is glycosylated (N-linked (GlcNAc...) asparagine). The segment at 719–738 (PASAGSPEHFRPPGSRLAPS) is disordered. Residues 748–768 (LIVIIVLAGSCTLLLAAIIAI) traverse the membrane as a helical segment. Residues 769–1069 (ATTCNRRKKE…SPKKGTNENV (301 aa)) are Cytoplasmic-facing. Disordered regions lie at residues 777 to 859 (KEVR…TGES), 905 to 927 (REAE…DSDS), and 1031 to 1069 (LSPP…NENV). Composition is skewed to basic and acidic residues over residues 780–790 (RKGGALREERP) and 905–920 (REAE…KGDS). At Ser1052 the chain carries Phosphoserine.

The N-terminal extracellular domain forms homophilic interactions; these interactions activate p38 MAPK via TAOK2 and trigger endocytosis. Interacts with CDH2; this interaction may lead to CDH2 cointernalization. Interacts with CDH11. Interacts with TAOK2. Enriched in brain relative to peripheral tissues, with low expression in the testis. Expressed in hippocampal neurons (at protein level).

It is found in the cell membrane. It localises to the cell projection. The protein resides in the dendrite. Its subcellular location is the presynaptic cell membrane. The protein localises to the postsynaptic cell membrane. Calcium-dependent cell-adhesion protein. May play a role in activity-induced synaptic reorganization underlying long term memory. Could be involved in CDH2 internalization through TAOK2/p38 MAPK pathway. In hippocampal neurons, may play a role in the down-regulation of dendritic spines, maybe through its action on CDH2 endocytosis. This is Protocadherin-8 (Pcdh8) from Rattus norvegicus (Rat).